A 371-amino-acid chain; its full sequence is MTTPTQQLSDAGVSIWLDDLSRGRLQTGTLRKLIEEKNVVGVTTNPSIFHAAITSGTDYDATIAEQAAAGSTVEETVFEITTTDVADACDLFAPVAAATRGVDGRVSIEVDPRLAWDTAGTIAEAKHLYKKVNKDNVLIKIPATLEGLEAITATLAEGISVNVTLIFSLERYRAVINAFQSGLEQAKGNGHDLSKIHSVASFFVSRVDAEIDKRLDAIGTDEAKALKGKAGLANARLAYQVYEELFSTERWALLAEAGALPQRPLWASTGVKDPSYPDTLYVTELVAPGVVNTMPEKTLDATFDHGVVTGDTVTRGYDDANATLNALDALGISYNDVVALLESEGLDKFVASWKELLGDVEGALASARKAS.

Catalysis depends on Lys-140, which acts as the Schiff-base intermediate with substrate.

The protein belongs to the transaldolase family. Type 2 subfamily.

The protein localises to the cytoplasm. It catalyses the reaction D-sedoheptulose 7-phosphate + D-glyceraldehyde 3-phosphate = D-erythrose 4-phosphate + beta-D-fructose 6-phosphate. The protein operates within carbohydrate degradation; pentose phosphate pathway; D-glyceraldehyde 3-phosphate and beta-D-fructose 6-phosphate from D-ribose 5-phosphate and D-xylulose 5-phosphate (non-oxidative stage): step 2/3. Functionally, transaldolase is important for the balance of metabolites in the pentose-phosphate pathway. This is Transaldolase from Arthrobacter sp. (strain FB24).